Consider the following 147-residue polypeptide: Large ribosomal subunit protein bL9 (147 aa).

The disordered stretch occupies residues 40 to 60; the sequence is TTGNLKQHEAHERKAAEEAKQ. Positions 45–59 are enriched in basic and acidic residues; the sequence is KQHEAHERKAAEEAK.

This sequence belongs to the bacterial ribosomal protein bL9 family.

Binds to the 23S rRNA. The polypeptide is Large ribosomal subunit protein bL9 (Exiguobacterium sibiricum (strain DSM 17290 / CCUG 55495 / CIP 109462 / JCM 13490 / 255-15)).